The following is a 94-amino-acid chain: Protein RESPONSE TO LOW SULFUR 2 (94 aa).

Residues 15 to 63 (VDELRRKNGEMEKAVEEMKKEMLQLWRRTQVAEEAEERLCSQLAELEAE) adopt a coiled-coil conformation.

Functionally, may be involved in defense responses monitoring. Probably implicated into osmotic stress signaling. This is Protein RESPONSE TO LOW SULFUR 2 from Arabidopsis thaliana (Mouse-ear cress).